The primary structure comprises 191 residues: Dephospho-CoA kinase (191 aa).

Residues 3–191 (AIGITGSYAS…KLIKDLECRV (189 aa)) enclose the DPCK domain. 11-16 (ASGKTF) contributes to the ATP binding site.

It belongs to the CoaE family.

The protein localises to the cytoplasm. It carries out the reaction 3'-dephospho-CoA + ATP = ADP + CoA + H(+). It participates in cofactor biosynthesis; coenzyme A biosynthesis; CoA from (R)-pantothenate: step 5/5. Its function is as follows. Catalyzes the phosphorylation of the 3'-hydroxyl group of dephosphocoenzyme A to form coenzyme A. This chain is Dephospho-CoA kinase, found in Rickettsia prowazekii (strain Madrid E).